Reading from the N-terminus, the 231-residue chain is Acyl-protein thioesterase 2 (231 aa).

C2 carries S-palmitoyl cysteine lipidation. A Phosphoserine modification is found at S82. Active-site charge relay system residues include S122, D176, and H210.

The protein belongs to the AB hydrolase superfamily. AB hydrolase 2 family. In terms of tissue distribution, expressed in various breast cancer cell lines.

The protein resides in the cytoplasm. It carries out the reaction S-hexadecanoyl-L-cysteinyl-[protein] + H2O = L-cysteinyl-[protein] + hexadecanoate + H(+). It catalyses the reaction prostaglandin E2 1-glyceryl ester + H2O = prostaglandin E2 + glycerol + H(+). The catalysed reaction is 1-hexadecanoyl-sn-glycero-3-phosphocholine + H2O = sn-glycerol 3-phosphocholine + hexadecanoate + H(+). The enzyme catalyses 1-octadecanoyl-sn-glycero-3-phosphocholine + H2O = octadecanoate + sn-glycerol 3-phosphocholine + H(+). It carries out the reaction 1-hexadecanoyl-sn-glycero-3-phosphate + H2O = sn-glycerol 3-phosphate + hexadecanoate + H(+). It catalyses the reaction 1-hexadecanoyl-sn-glycero-3-phospho-L-serine + H2O = sn-glycero-3-phospho-L-serine + hexadecanoate + H(+). Its activity is regulated as follows. Inhibited by compound 1 or (5,5-Dioxido-4H-thieno[3,2-c]thiochromen-2-yl)(4-(4-methoxyphenyl)piperazin-1-yl)methanone. Its function is as follows. Acts as an acyl-protein thioesterase hydrolyzing fatty acids from S-acylated cysteine residues in proteins such as trimeric G alpha proteins, GSDMD, GAP43, ZDHHC6 or HRAS. Deacylates GAP43. Mediates depalmitoylation of ZDHHC6. Has lysophospholipase activity. Hydrolyzes prostaglandin glycerol esters (PG-Gs) in the following order prostaglandin D2-glycerol ester (PGD2-G) &gt; prostaglandin E2 glycerol ester (PGE2-G) &gt; prostaglandin F2-alpha-glycerol ester (PGF2-alpha-G). Hydrolyzes 1-arachidonoylglycerol but not 2-arachidonoylglycerol or arachidonoylethanolamide. This chain is Acyl-protein thioesterase 2 (LYPLA2), found in Homo sapiens (Human).